The following is a 98-amino-acid chain: Envelope glycoprotein N (98 aa).

A signal peptide spans 1–24 (MVSSAGLSLTLVAALCALVAPALS). The Virion surface portion of the chain corresponds to 25 to 60 (SIVSTEGPLPLLREESRINFWNAACAARGVPVDQPT). A helical transmembrane segment spans residues 61-81 (AAAVTFYICLLAVLVVALGYA). Topologically, residues 82-98 (TRTCTRMLHASPAGRRV) are intravirion.

It belongs to the herpesviridae glycoprotein N family. Interacts (via N-terminus) with gM (via N-terminus). The gM-gN heterodimer forms the gCII complex. O-glycosylated.

It localises to the virion membrane. Its subcellular location is the host membrane. It is found in the host Golgi apparatus. The protein localises to the host trans-Golgi network. Functionally, envelope glycoprotein necessary for proper maturation of gM and modulation of its membrane fusion activity. Also plays a critical role in virion morphogenesis. In Suid herpesvirus 1 (SuHV-1), this protein is Envelope glycoprotein N.